A 99-amino-acid chain; its full sequence is NADH-quinone oxidoreductase subunit K (99 aa).

3 helical membrane-spanning segments follow: residues 3–23 (PINY…GVLL), 28–48 (IVMF…FVTF), and 59–79 (MIAF…LAII).

Belongs to the complex I subunit 4L family. NDH-1 is composed of 14 different subunits. Subunits NuoA, H, J, K, L, M, N constitute the membrane sector of the complex.

It is found in the cell membrane. The enzyme catalyses a quinone + NADH + 5 H(+)(in) = a quinol + NAD(+) + 4 H(+)(out). NDH-1 shuttles electrons from NADH, via FMN and iron-sulfur (Fe-S) centers, to quinones in the respiratory chain. The immediate electron acceptor for the enzyme in this species is believed to be a menaquinone. Couples the redox reaction to proton translocation (for every two electrons transferred, four hydrogen ions are translocated across the cytoplasmic membrane), and thus conserves the redox energy in a proton gradient. In Mycobacterium avium (strain 104), this protein is NADH-quinone oxidoreductase subunit K.